We begin with the raw amino-acid sequence, 324 residues long: Probable UDP-sugar transporter protein SLC35A4 (324 aa).

Residues 1–18 are Cytoplasmic-facing; the sequence is MSVEDGGMPGLSRPRQAR. Residues 19–39 form a helical membrane-spanning segment; that stretch reads WTLMLLLSTAMYGAHAPLLAL. At 40–52 the chain is on the lumenal side; it reads CHVDGRVPFRPSS. Residues 53–73 form a helical membrane-spanning segment; it reads AVLLTELTKLLLCAFSLLVGW. The Cytoplasmic portion of the chain corresponds to 74–85; the sequence is QAWPQGAPPWRQ. A helical transmembrane segment spans residues 86-106; sequence AAPFALSALLYGANNNLVIYL. The Lumenal segment spans residues 107 to 142; the sequence is QRYMDPSTYQVLSNLKIGSTAVLYCLCLRHRLSVRQ. The helical transmembrane segment at 143–163 threads the bilayer; that stretch reads GLALLLLMAAGACYAAGGLQV. Residues 164 to 180 are Cytoplasmic-facing; that stretch reads PGNTLPRPPPAAAASPM. A helical membrane pass occupies residues 181–201; sequence PLHITPLGLLLLILYCLISGL. The Lumenal segment spans residues 202–214; the sequence is SSVYTELLMKRQQ. Residues 215–235 traverse the membrane as a helical segment; it reads LPLALQNLFLYTFGVLLNLGL. Residues 236–250 lie on the Cytoplasmic side of the membrane; sequence HAGGGPGPGLLEGFS. Residues 251–271 form a helical membrane-spanning segment; it reads GWAALVVLSQALNGLLMSVVM. Residues 272–275 lie on the Lumenal side of the membrane; the sequence is KHGS. A helical transmembrane segment spans residues 276 to 298; sequence SITRLFVVSCSLVVNAVLSAVLL. Over 299–324 the chain is Cytoplasmic; sequence RLQLTAAFFLATLLIGLAMRLYYGSR.

It belongs to the nucleotide-sugar transporter family. SLC35A subfamily. In terms of assembly, found in a complex with SLC35A2 and SLC35A3.

The protein localises to the golgi apparatus membrane. The enzyme catalyses CDP-L-ribitol(in) + CDP(out) = CDP-L-ribitol(out) + CDP(in). In terms of biological role, mediates the transport of CDP-ribitol. Does not exhibit CMP-sialic acid, UDP-galactose and UDP-N-acetylglucosamine transport activity. The protein is Probable UDP-sugar transporter protein SLC35A4 of Pongo abelii (Sumatran orangutan).